The sequence spans 343 residues: 2,3,4,5-tetrahydropyridine-2,6-dicarboxylate N-succinyltransferase (343 aa).

E204 contacts Mg(2+). The active-site Acyl-anhydride intermediate is the E220. Residues R222, G237, S240, A263, 278 to 279 (ES), G286, K303, and 316 to 319 (RRNS) each bind succinyl-CoA.

The protein belongs to the type 2 tetrahydrodipicolinate N-succinyltransferase family. Homotrimer.

Its subcellular location is the cytoplasm. It carries out the reaction (S)-2,3,4,5-tetrahydrodipicolinate + succinyl-CoA + H2O = (S)-2-succinylamino-6-oxoheptanedioate + CoA. The protein operates within amino-acid biosynthesis; L-lysine biosynthesis via DAP pathway; LL-2,6-diaminopimelate from (S)-tetrahydrodipicolinate (succinylase route): step 1/3. Its function is as follows. Catalyzes the conversion of the cyclic tetrahydrodipicolinate (THDP) into the acyclic N-succinyl-L-2-amino-6-oxopimelate using succinyl-CoA. The protein is 2,3,4,5-tetrahydropyridine-2,6-dicarboxylate N-succinyltransferase of Vibrio cholerae serotype O1 (strain ATCC 39315 / El Tor Inaba N16961).